The primary structure comprises 301 residues: Tyrosine recombinase XerD (301 aa).

In terms of domain architecture, Core-binding (CB) spans 6 to 89; the sequence is PLHQQLIEQF…ALKVFFHFLK (84 aa). Residues 108–293 enclose the Tyr recombinase domain; sequence RLPSILSTEE…ASESIIEKFH (186 aa). Residues Arg-152, Lys-174, His-245, Arg-248, and His-271 contribute to the active site. The O-(3'-phospho-DNA)-tyrosine intermediate role is filled by Tyr-280.

This sequence belongs to the 'phage' integrase family. XerD subfamily. Forms a cyclic heterotetrameric complex composed of two molecules of XerC and two molecules of XerD.

The protein resides in the cytoplasm. In terms of biological role, site-specific tyrosine recombinase, which acts by catalyzing the cutting and rejoining of the recombining DNA molecules. The XerC-XerD complex is essential to convert dimers of the bacterial chromosome into monomers to permit their segregation at cell division. It also contributes to the segregational stability of plasmids. This is Tyrosine recombinase XerD from Chlamydia muridarum (strain MoPn / Nigg).